A 284-amino-acid chain; its full sequence is 4-diphosphocytidyl-2-C-methyl-D-erythritol kinase (284 aa).

Lys-17 is a catalytic residue. 100-110 (PMGGGLGGGSS) contributes to the ATP binding site. Asp-142 is an active-site residue.

This sequence belongs to the GHMP kinase family. IspE subfamily.

The catalysed reaction is 4-CDP-2-C-methyl-D-erythritol + ATP = 4-CDP-2-C-methyl-D-erythritol 2-phosphate + ADP + H(+). It functions in the pathway isoprenoid biosynthesis; isopentenyl diphosphate biosynthesis via DXP pathway; isopentenyl diphosphate from 1-deoxy-D-xylulose 5-phosphate: step 3/6. Functionally, catalyzes the phosphorylation of the position 2 hydroxy group of 4-diphosphocytidyl-2C-methyl-D-erythritol. The protein is 4-diphosphocytidyl-2-C-methyl-D-erythritol kinase of Aromatoleum aromaticum (strain DSM 19018 / LMG 30748 / EbN1) (Azoarcus sp. (strain EbN1)).